The chain runs to 511 residues: Sterol 14-alpha demethylase resB (511 aa).

The chain crosses the membrane as a helical span at residues 3-23 (ILWIVAYALLAFAASIALNLV). Cysteine 451 contacts heme.

This sequence belongs to the cytochrome P450 family. Heme serves as cofactor.

It is found in the membrane. It carries out the reaction a 14alpha-methyl steroid + 3 reduced [NADPH--hemoprotein reductase] + 3 O2 = a Delta(14) steroid + formate + 3 oxidized [NADPH--hemoprotein reductase] + 4 H2O + 4 H(+). The enzyme catalyses a 14alpha-methyl steroid + reduced [NADPH--hemoprotein reductase] + O2 = a 14alpha-hydroxymethyl steroid + oxidized [NADPH--hemoprotein reductase] + H2O + H(+). The catalysed reaction is a 14alpha-hydroxymethyl steroid + reduced [NADPH--hemoprotein reductase] + O2 = a 14alpha-formyl steroid + oxidized [NADPH--hemoprotein reductase] + 2 H2O + H(+). It catalyses the reaction a 14alpha-formyl steroid + reduced [NADPH--hemoprotein reductase] + O2 = a Delta(14) steroid + formate + oxidized [NADPH--hemoprotein reductase] + H2O + 2 H(+). It carries out the reaction lanosterol + 3 reduced [NADPH--hemoprotein reductase] + 3 O2 = 4,4-dimethyl-5alpha-cholesta-8,14,24-trien-3beta-ol + formate + 3 oxidized [NADPH--hemoprotein reductase] + 4 H2O + 4 H(+). The enzyme catalyses lanosterol + reduced [NADPH--hemoprotein reductase] + O2 = 32-hydroxylanosterol + oxidized [NADPH--hemoprotein reductase] + H2O + H(+). The catalysed reaction is 32-hydroxylanosterol + reduced [NADPH--hemoprotein reductase] + O2 = 32-oxolanosterol + oxidized [NADPH--hemoprotein reductase] + 2 H2O + H(+). It catalyses the reaction 32-oxolanosterol + reduced [NADPH--hemoprotein reductase] + O2 = 4,4-dimethyl-5alpha-cholesta-8,14,24-trien-3beta-ol + formate + oxidized [NADPH--hemoprotein reductase] + H2O + 2 H(+). It carries out the reaction eburicol + 3 reduced [NADPH--hemoprotein reductase] + 3 O2 = 14-demethyleburicol + formate + 3 oxidized [NADPH--hemoprotein reductase] + 4 H2O + 4 H(+). The enzyme catalyses eburicol + reduced [NADPH--hemoprotein reductase] + O2 = 32-hydroxyeburicol + oxidized [NADPH--hemoprotein reductase] + H2O + H(+). The catalysed reaction is 32-hydroxyeburicol + reduced [NADPH--hemoprotein reductase] + O2 = 32-oxoeburicol + oxidized [NADPH--hemoprotein reductase] + 2 H2O + H(+). It catalyses the reaction 32-oxoeburicol + reduced [NADPH--hemoprotein reductase] + O2 = 14-demethyleburicol + formate + oxidized [NADPH--hemoprotein reductase] + H2O + 2 H(+). In terms of biological role, sterol 14-alpha demethylase; part of the gene cluster that mediates the biosynthesis of the tetrahydropyranyl antifungal agent restricticin that acts as an inhibitor of CYP51 and blocks the ergosterol biosynthesis. Sterol 14-alpha-demethylase plays a critical role in the biosynthesis of ergosterol, the major sterol component in fungal membranes that participates in a variety of functions. ResB acts as a self-resistant CYP51 that contains mutations found in CYP51s isolated from azole resistance strains and that is not inhibited by the final product of the cluster, restricticin. The polypeptide is Sterol 14-alpha demethylase resB (Aspergillus sclerotiorum).